Reading from the N-terminus, the 24-residue chain is Humanin-like 3 (24 aa).

Belongs to the humanin family. As to expression, highly expressed in testis. Also expressed in kidney, heart, skeletal muscles and brain.

Its subcellular location is the secreted. The protein resides in the cytoplasm. Its function is as follows. Plays a role as a neuroprotective and antiapoptotic factor. In Homo sapiens (Human), this protein is Humanin-like 3.